Here is a 226-residue protein sequence, read N- to C-terminus: ATP synthase subunit a (226 aa).

The next 6 membrane-spanning stretches (helical) occupy residues 17–37 (FSYF…AMMA), 79–99 (LVAT…IPGF), 105–125 (SLNL…FEGI), 134–154 (FAHF…IEIV), 176–196 (LFLM…AYVL), and 199–219 (FMAF…LAGA).

The protein belongs to the ATPase A chain family. As to quaternary structure, F-type ATPases have 2 components, CF(1) - the catalytic core - and CF(0) - the membrane proton channel. CF(1) has five subunits: alpha(3), beta(3), gamma(1), delta(1), epsilon(1). CF(0) has three main subunits: a(1), b(2) and c(9-12). The alpha and beta chains form an alternating ring which encloses part of the gamma chain. CF(1) is attached to CF(0) by a central stalk formed by the gamma and epsilon chains, while a peripheral stalk is formed by the delta and b chains.

Its subcellular location is the cell inner membrane. Key component of the proton channel; it plays a direct role in the translocation of protons across the membrane. This Campylobacter jejuni subsp. jejuni serotype O:6 (strain 81116 / NCTC 11828) protein is ATP synthase subunit a.